Here is a 153-residue protein sequence, read N- to C-terminus: UPF0225 protein ETA_15740 (153 aa).

It belongs to the UPF0225 family.

In Erwinia tasmaniensis (strain DSM 17950 / CFBP 7177 / CIP 109463 / NCPPB 4357 / Et1/99), this protein is UPF0225 protein ETA_15740.